We begin with the raw amino-acid sequence, 81 residues long: uncharacterized protein (81 aa).

An N-terminal signal peptide occupies residues 1–24 (MRKILKIVSLLILLLLLVYSFFSP). Residues 25–28 (NSQL) lie on the Extracellular side of the membrane. A helical transmembrane segment spans residues 29–49 (FVFVQLIIIAFLIGFGINCFV). The Cytoplasmic portion of the chain corresponds to 50 to 81 (KKERYQGTLYFVIAICNITINLDKINELIQSI).

The protein resides in the cell membrane. This is an uncharacterized protein from Bacillus subtilis (strain 168).